The chain runs to 491 residues: Glutamyl-tRNA(Gln) amidotransferase subunit A (491 aa).

Serine 158 serves as the catalytic Charge relay system. Serine 182 serves as the catalytic Acyl-ester intermediate.

Belongs to the amidase family. GatA subfamily. As to quaternary structure, heterotrimer of A, B and C subunits.

It carries out the reaction L-glutamyl-tRNA(Gln) + L-glutamine + ATP + H2O = L-glutaminyl-tRNA(Gln) + L-glutamate + ADP + phosphate + H(+). Its function is as follows. Allows the formation of correctly charged Gln-tRNA(Gln) through the transamidation of misacylated Glu-tRNA(Gln) in organisms which lack glutaminyl-tRNA synthetase. The reaction takes place in the presence of glutamine and ATP through an activated gamma-phospho-Glu-tRNA(Gln). In Bradyrhizobium diazoefficiens (strain JCM 10833 / BCRC 13528 / IAM 13628 / NBRC 14792 / USDA 110), this protein is Glutamyl-tRNA(Gln) amidotransferase subunit A.